Consider the following 445-residue polypeptide: Gamma-glutamyl phosphate reductase (445 aa).

Belongs to the gamma-glutamyl phosphate reductase family.

The protein localises to the cytoplasm. It catalyses the reaction L-glutamate 5-semialdehyde + phosphate + NADP(+) = L-glutamyl 5-phosphate + NADPH + H(+). The protein operates within amino-acid biosynthesis; L-proline biosynthesis; L-glutamate 5-semialdehyde from L-glutamate: step 2/2. Catalyzes the NADPH-dependent reduction of L-glutamate 5-phosphate into L-glutamate 5-semialdehyde and phosphate. The product spontaneously undergoes cyclization to form 1-pyrroline-5-carboxylate. The sequence is that of Gamma-glutamyl phosphate reductase from Saccharopolyspora erythraea (strain ATCC 11635 / DSM 40517 / JCM 4748 / NBRC 13426 / NCIMB 8594 / NRRL 2338).